The primary structure comprises 456 residues: MPTPMTPVKVGALACQRNSFLFDGFKTLVVSCEPTKNKKGEIEGYEIELQDTILFPEGGGQPSDSGFLKIVEGNRNSSKIEKILVSHVSRFGLHAKHHVNDYIEPGTTVEVAVDEQKRMDYMQQHTGQHLLSAILERNYKVDTVSWSMGGIITKKKPVLEPSDYFNYIELNRKLTLDEITNVSDEINQLIINFPQEIIVEERIGEETVDEVSTSKIPDDYDLSKGVLRTIHIGDIDSNPCCGTHLKCTSQIGSILILSNQSAVRGSNSRLYFMCGKRVSLYAKSVNKILLDSKNLLSCSETQISEKITRQTKQIQQLNKREQYWIKRLARTASEELMNTLKASGKKRAYFMEEEYGTLELLLQIHKEVSNFLKDDTEGYEIILCGYERQTNTGSLLILSESGEKIANLAANLGSILQNLKGGGGKKGGKWQGKITSISNAEFAALSDYLSHDFASC.

Residues histidine 125, histidine 129, cysteine 240, and histidine 244 each contribute to the Zn(2+) site.

The protein belongs to the class-II aminoacyl-tRNA synthetase family. Alax-L subfamily. Requires Zn(2+) as cofactor.

May function in trans to edit the amino acid moiety from incorrectly charged tRNA(Ala). The polypeptide is Putative alanyl-tRNA editing protein alaX (Saccharomyces cerevisiae (strain ATCC 204508 / S288c) (Baker's yeast)).